Here is a 206-residue protein sequence, read N- to C-terminus: MKVGLVDYSMGNMHSVSRAIQQANQQVCVVRSESELAQVHILVVPGVGHFDLAMKKLEQKGLRTGIAKWIAKGNPYIGICLGMHILFETSEEGKEEGLGVYKEQVKRLPVKVIPHMGWNRLECQNSECQNSEWVNWKAWPNAWAYFVHSYGVMASSQACATTTYEKIQMVAAIEKDNCFAMQFHPEKSGEFGLWLWREVMKKAASL.

In terms of domain architecture, Glutamine amidotransferase type-1 spans Lys2–Leu206. Cys80 functions as the Nucleophile in the catalytic mechanism. Catalysis depends on residues His184 and Glu186.

Heterodimer of hisH and hisF.

Its subcellular location is the plastid. It is found in the chloroplast. The catalysed reaction is 5-[(5-phospho-1-deoxy-D-ribulos-1-ylimino)methylamino]-1-(5-phospho-beta-D-ribosyl)imidazole-4-carboxamide + L-glutamine = D-erythro-1-(imidazol-4-yl)glycerol 3-phosphate + 5-amino-1-(5-phospho-beta-D-ribosyl)imidazole-4-carboxamide + L-glutamate + H(+). The enzyme catalyses L-glutamine + H2O = L-glutamate + NH4(+). The protein operates within amino-acid biosynthesis; L-histidine biosynthesis; L-histidine from 5-phospho-alpha-D-ribose 1-diphosphate: step 5/9. IGPS catalyzes the conversion of PRFAR and glutamine to IGP, AICAR and glutamate. The HisH subunit catalyzes the hydrolysis of glutamine to glutamate and ammonia as part of the synthesis of IGP and AICAR. The resulting ammonia molecule is channeled to the active site of HisF. This chain is Imidazole glycerol phosphate synthase subunit hisH, found in Cyanidioschyzon merolae (strain NIES-3377 / 10D) (Unicellular red alga).